Here is a 253-residue protein sequence, read N- to C-terminus: Probable transcriptional regulatory protein RC0681 (253 aa).

Positions 1 to 21 are disordered; the sequence is MAGHSKFKNIQHRKGAQDKKR.

It belongs to the TACO1 family.

It is found in the cytoplasm. This is Probable transcriptional regulatory protein RC0681 from Rickettsia conorii (strain ATCC VR-613 / Malish 7).